The chain runs to 511 residues: Glucans biosynthesis protein G (511 aa).

Residues M1–A22 form the signal peptide.

This sequence belongs to the OpgD/OpgG family.

The protein localises to the periplasm. It functions in the pathway glycan metabolism; osmoregulated periplasmic glucan (OPG) biosynthesis. In terms of biological role, involved in the biosynthesis of osmoregulated periplasmic glucans (OPGs). This is Glucans biosynthesis protein G from Shigella dysenteriae serotype 1 (strain Sd197).